We begin with the raw amino-acid sequence, 756 residues long: ATP-dependent DNA helicase Hel308 (756 aa).

Residues glutamine 29 and 47–54 (SATASGKT) each bind ATP. Residues 34–201 (RAGLLNGENI…WLNAKLVKSD (168 aa)) form the Helicase ATP-binding domain. The short motif at 146–149 (DEIH) is the DEAH box element. Residues 233–435 (SLINLTVDTL…PTSLKFHTLS (203 aa)) form the Helicase C-terminal domain.

Belongs to the helicase family. Hel308 subfamily. Monomer.

The catalysed reaction is Couples ATP hydrolysis with the unwinding of duplex DNA by translocating in the 3'-5' direction.. The enzyme catalyses ATP + H2O = ADP + phosphate + H(+). Its function is as follows. DNA-dependent ATPase and 3'-5' DNA helicase that may be involved in repair of stalled replication forks. This is ATP-dependent DNA helicase Hel308 from Caldivirga maquilingensis (strain ATCC 700844 / DSM 13496 / JCM 10307 / IC-167).